Here is a 327-residue protein sequence, read N- to C-terminus: Polyprenyl transferase esdpC (327 aa).

8 helical membrane passes run 35–54 (YNPL…AGAS), 73–93 (LLVF…NDWI), 118–138 (EALI…AYTL), 140–160 (GHNV…YPFG), 171–191 (YPQY…WLAI), 202–222 (IMES…LNTA), 239–259 (VYFL…ALVL), and 307–327 (ENFA…LLKS).

The protein belongs to the UbiA prenyltransferase family. It depends on Mg(2+) as a cofactor.

It localises to the membrane. The protein operates within secondary metabolite biosynthesis; terpenoid biosynthesis. Functionally, olyprenyl transferase; part of the cluster that mediates the biosynthesis of shearones, diterpenoid pyrones (DPs) which are structurally diverse meroterpenoids consisting of a diterpene linked by a pyrone, and which may exhibit a range of bioactivities. Within the pathway, esdpC takes part to the biosynthesis of the molecular scaffold by catalyzing the C-3 geranylgeranylation reaction of the alpha-pyrone produced by esdpA. The molecular scaffold is commonly biosynthesized by a series of enzymes including the non-reducing polyketide synthase (NR-PKS) esdpA that generates an alpha-pyrone; the prenyltransferase esdpC that attaches a geranylgeranyl pyrophosphate (GGPP) produced by the GGPP synthase (GGPPS) esdpD onto the pyrone unit; the FAD-dependent monooxygenase esdpE that converts an olefin on the diterpene unit into an epoxide; and the terpene cyclase esdpB that catalyzes the cyclization reactions to give the molecular backbone shearone A. In the modification steps, esdpF oxidizes the hydroxy group to a ketone at C-3 and esdpG then attaches hydroxy groups at both C-11 and C-12. After that, esdpI hydroxylates at C-20 and esdpH hydroxylates at C-6'. The ether bridge is generated by nucleophilic attack of the hydroxy group at C-20 to the carbonyl carbon at C-3. EsdpH can also functions prior to esdpI. The different combinations of these modification enzymes lead to the production of diverse shearone derivatives, shearone I being the end product of the pathway. The alpha-ketoglutarate-dependent dioxygenase esdpJ seems not to be involved in this pathway. This is Polyprenyl transferase esdpC from Penicillium shearii (Eupenicillium shearii).